The sequence spans 365 residues: Aminomethyltransferase (365 aa).

The protein belongs to the GcvT family. In terms of assembly, the glycine cleavage system is composed of four proteins: P, T, L and H.

It carries out the reaction N(6)-[(R)-S(8)-aminomethyldihydrolipoyl]-L-lysyl-[protein] + (6S)-5,6,7,8-tetrahydrofolate = N(6)-[(R)-dihydrolipoyl]-L-lysyl-[protein] + (6R)-5,10-methylene-5,6,7,8-tetrahydrofolate + NH4(+). The glycine cleavage system catalyzes the degradation of glycine. The polypeptide is Aminomethyltransferase (Desulfitobacterium hafniense (strain Y51)).